A 300-amino-acid chain; its full sequence is 4-hydroxy-tetrahydrodipicolinate synthase (300 aa).

Thr54 provides a ligand contact to pyruvate. Tyr142 functions as the Proton donor/acceptor in the catalytic mechanism. Residue Lys170 is the Schiff-base intermediate with substrate of the active site. Residue Ile212 coordinates pyruvate.

The protein belongs to the DapA family. Homotetramer; dimer of dimers.

The protein localises to the cytoplasm. The enzyme catalyses L-aspartate 4-semialdehyde + pyruvate = (2S,4S)-4-hydroxy-2,3,4,5-tetrahydrodipicolinate + H2O + H(+). It participates in amino-acid biosynthesis; L-lysine biosynthesis via DAP pathway; (S)-tetrahydrodipicolinate from L-aspartate: step 3/4. Catalyzes the condensation of (S)-aspartate-beta-semialdehyde [(S)-ASA] and pyruvate to 4-hydroxy-tetrahydrodipicolinate (HTPA). This is 4-hydroxy-tetrahydrodipicolinate synthase from Halorhodospira halophila (strain DSM 244 / SL1) (Ectothiorhodospira halophila (strain DSM 244 / SL1)).